Consider the following 426-residue polypeptide: C2H2 type master regulator of conidiophore development brlA (426 aa).

Disordered regions lie at residues cysteine 25–threonine 71 and glycine 281–leucine 302. A compositionally biased stretch (low complexity) spans serine 30–serine 44. Residues isoleucine 45–glutamate 58 are compositionally biased toward polar residues. The segment covering proline 288 to proline 297 has biased composition (basic residues). 2 C2H2-type zinc fingers span residues phenylalanine 316–histidine 340 and histidine 346–histidine 371. Residues leucine 384 to glutamate 426 form a disordered region.

Its subcellular location is the nucleus. BrlA, abaA and wetA are pivotal regulators of conidiophore development and conidium maturation. They act individually and together to regulate their own expression and that of numerous other sporulation-specific genes. Binds promoters of target genes at brlA response elements (BREs) containing the conserved sequence 5'-(C/A)(A/G)AGGG(G/A)-3'. Positively regulates expression of the gliotoxin biosynthetic gene cluster in actively growing vegetative cells, and likely bridges morphological and chemical development during the life-cycle. Regulates (directly or indirectly) the ergot cluster genes. Positively regulates expression of the fumiquinazoline C biosynthetic gene cluster. Positively regulates expression of the melanin biosynthetic gene cluster. Mediates repression of ribosomal protein gene expression in response to nitrogen depletion. The sequence is that of C2H2 type master regulator of conidiophore development brlA from Aspergillus fumigatus (strain ATCC MYA-4609 / CBS 101355 / FGSC A1100 / Af293) (Neosartorya fumigata).